A 403-amino-acid polypeptide reads, in one-letter code: Imidazolonepropionase (403 aa).

The Fe(3+) site is built by H69 and H71. Zn(2+) is bound by residues H69 and H71. Positions 78, 141, and 174 each coordinate 4-imidazolone-5-propanoate. Y141 provides a ligand contact to N-formimidoyl-L-glutamate. H239 is a Fe(3+) binding site. Zn(2+) is bound at residue H239. Position 242 (Q242) interacts with 4-imidazolone-5-propanoate. A Fe(3+)-binding site is contributed by D314. D314 provides a ligand contact to Zn(2+). 2 residues coordinate N-formimidoyl-L-glutamate: N316 and G318. A 4-imidazolone-5-propanoate-binding site is contributed by S319.

It belongs to the metallo-dependent hydrolases superfamily. HutI family. It depends on Zn(2+) as a cofactor. Fe(3+) serves as cofactor.

The protein resides in the cytoplasm. The catalysed reaction is 4-imidazolone-5-propanoate + H2O = N-formimidoyl-L-glutamate. The protein operates within amino-acid degradation; L-histidine degradation into L-glutamate; N-formimidoyl-L-glutamate from L-histidine: step 3/3. Functionally, catalyzes the hydrolytic cleavage of the carbon-nitrogen bond in imidazolone-5-propanoate to yield N-formimidoyl-L-glutamate. It is the third step in the universal histidine degradation pathway. This Legionella pneumophila (strain Corby) protein is Imidazolonepropionase.